A 396-amino-acid polypeptide reads, in one-letter code: MLLTKKVLWYFRHGIEYQIRSIACKKGYSEHNVSRVLIEKARSLSSEYLQFHQVNNKDQSAMTNDTDLAKRIARLRRVHNAYSKFKSLSEQISDLKQMEAQESDAEVKMMAVTEINEISNKIPKSIEDLENTLLPQADSYALPALIEIRPGVGGTEAAIFANELVEMYFQYANFKGWNCKFISKSAVQGLEAITEAIFSIEGEGAYGHLMLEGGVHRVQRTPATETKGRVHTSTASVIVLPQVSNDESSSLYDSSEVKIEVMRSRGAGGQHVNRTESAVRLTHIPTGITVSMQDSRSQHQNKEKAFLVLNSRLAALNAAKENEAERLKRKNQVTSSDRSEKLRTYNFNQNRVTDHRIGLSMHDLSTFMQGEEKFDEFLEKIRIWNREQLLLHSEIV.

An N5-methylglutamine modification is found at glutamine 270.

It belongs to the prokaryotic/mitochondrial release factor family. Post-translationally, methylation of glutamine in the GGQ triplet is conserved from bacteria to mammals.

It is found in the mitochondrion. The protein is Putative peptide chain release factor 1, mitochondrial of Schizosaccharomyces pombe (strain 972 / ATCC 24843) (Fission yeast).